Reading from the N-terminus, the 213-residue chain is Cell division protein SepF (213 aa).

Residues 27–103 (VDAPAPRRAP…GSLRGSAPTR (77 aa)) are disordered. Composition is skewed to basic and acidic residues over residues 35–51 (APVE…RFAD) and 72–90 (DEDR…DRPA).

Belongs to the SepF family. As to quaternary structure, homodimer. Interacts with FtsZ.

The protein localises to the cytoplasm. In terms of biological role, cell division protein that is part of the divisome complex and is recruited early to the Z-ring. Probably stimulates Z-ring formation, perhaps through the cross-linking of FtsZ protofilaments. Its function overlaps with FtsA. This chain is Cell division protein SepF, found in Mycobacteroides abscessus (strain ATCC 19977 / DSM 44196 / CCUG 20993 / CIP 104536 / JCM 13569 / NCTC 13031 / TMC 1543 / L948) (Mycobacterium abscessus).